The following is an 88-amino-acid chain: Large ribosomal subunit protein bL27 (88 aa).

A disordered region spans residues 1–22; it reads MAHKKGASSSRNGRDSNAQRLG. Polar residues predominate over residues 7 to 19; sequence ASSSRNGRDSNAQ.

This sequence belongs to the bacterial ribosomal protein bL27 family.

The chain is Large ribosomal subunit protein bL27 from Mycolicibacterium gilvum (strain PYR-GCK) (Mycobacterium gilvum (strain PYR-GCK)).